A 142-amino-acid polypeptide reads, in one-letter code: Ribosome-binding factor A (142 aa).

Positions 118-142 (DKNGDAEVDDTQVDDEPSVDSEKGE) are disordered. Over residues 123–136 (AEVDDTQVDDEPSV) the composition is skewed to acidic residues.

It belongs to the RbfA family. As to quaternary structure, monomer. Binds 30S ribosomal subunits, but not 50S ribosomal subunits or 70S ribosomes.

Its subcellular location is the cytoplasm. Its function is as follows. One of several proteins that assist in the late maturation steps of the functional core of the 30S ribosomal subunit. Associates with free 30S ribosomal subunits (but not with 30S subunits that are part of 70S ribosomes or polysomes). Required for efficient processing of 16S rRNA. May interact with the 5'-terminal helix region of 16S rRNA. The chain is Ribosome-binding factor A from Colwellia psychrerythraea (strain 34H / ATCC BAA-681) (Vibrio psychroerythus).